A 365-amino-acid chain; its full sequence is tRNA 2-selenouridine synthase (365 aa).

Residues 16–138 (FLLKTPLIDL…LRRYLINVID (123 aa)) form the Rhodanese domain. Cysteine 98 acts as the S-selanylcysteine intermediate in catalysis.

Belongs to the SelU family. As to quaternary structure, monomer.

The catalysed reaction is 5-methylaminomethyl-2-thiouridine(34) in tRNA + selenophosphate + (2E)-geranyl diphosphate + H2O + H(+) = 5-methylaminomethyl-2-selenouridine(34) in tRNA + (2E)-thiogeraniol + phosphate + diphosphate. The enzyme catalyses 5-methylaminomethyl-2-thiouridine(34) in tRNA + (2E)-geranyl diphosphate = 5-methylaminomethyl-S-(2E)-geranyl-thiouridine(34) in tRNA + diphosphate. It carries out the reaction 5-methylaminomethyl-S-(2E)-geranyl-thiouridine(34) in tRNA + selenophosphate + H(+) = 5-methylaminomethyl-2-(Se-phospho)selenouridine(34) in tRNA + (2E)-thiogeraniol. It catalyses the reaction 5-methylaminomethyl-2-(Se-phospho)selenouridine(34) in tRNA + H2O = 5-methylaminomethyl-2-selenouridine(34) in tRNA + phosphate. Its function is as follows. Involved in the post-transcriptional modification of the uridine at the wobble position (U34) of tRNA(Lys), tRNA(Glu) and tRNA(Gln). Catalyzes the conversion of 2-thiouridine (S2U-RNA) to 2-selenouridine (Se2U-RNA). Acts in a two-step process involving geranylation of 2-thiouridine (S2U) to S-geranyl-2-thiouridine (geS2U) and subsequent selenation of the latter derivative to 2-selenouridine (Se2U) in the tRNA chain. The sequence is that of tRNA 2-selenouridine synthase from Psychromonas ingrahamii (strain DSM 17664 / CCUG 51855 / 37).